The primary structure comprises 565 residues: Polyadenylate-binding protein 1-A (565 aa).

RRM domains lie at 10-88 (SSLY…WSQR), 98-175 (GNVF…PFKS), 188-265 (TNVF…RAQK), and 284-362 (VNLY…LAQR). The tract at residues 435-466 (YARGQPRQNGPRQNGGQPRQNGPRPDVSGAQP) is disordered. Polar residues predominate over residues 440 to 454 (PRQNGPRQNGGQPRQ). Positions 489 to 565 (SALNLQSIIN…REALEVLGSN (77 aa)) constitute a PABC domain.

This sequence belongs to the polyadenylate-binding protein type-1 family.

The protein localises to the cytoplasm. It localises to the nucleus. Its function is as follows. Binds the poly(A) tail of mRNA. Appears to be an important mediator of the multiple roles of the poly(A) tail in mRNA biogenesis, stability and translation. This chain is Polyadenylate-binding protein 1-A (pabpc1A), found in Dictyostelium discoideum (Social amoeba).